The primary structure comprises 619 residues: Frizzled and smoothened-like protein L (619 aa).

Residues 1–24 (MITNKSKYYFFLILIFINFYLINC) form the signal peptide. N-linked (GlcNAc...) asparagine glycosylation is found at asparagine 4, asparagine 63, asparagine 112, asparagine 143, asparagine 159, asparagine 184, and asparagine 203. The Extracellular segment spans residues 25–245 (QEEYPIDQTG…KQWDRLYDLS (221 aa)). The 139-residue stretch at 31 to 169 (DQTGKCEPYI…YSIYDLSLVN (139 aa)) folds into the FZ domain. Intrachain disulfides connect cysteine 36-cysteine 106 and cysteine 48-cysteine 99. The helical transmembrane segment at 246–266 (NSLSVLSCVGTLFLLFTFNIL) threads the bilayer. Over 267–278 (NKKINRFDRMNS) the chain is Cytoplasmic. Residues 279 to 299 (LFNGSVFMMSLSGVIILFAGG) form a helical membrane-spanning segment. The Extracellular portion of the chain corresponds to 300–321 (PRALIKDGGARISVWQDPLCSA). The chain crosses the membrane as a helical span at residues 322-342 (TGFIFQLFSIAAILFWVVMSF). The Cytoplasmic portion of the chain corresponds to 343–358 (ELWYKIKFMTKKLDLK). The helical transmembrane segment at 359 to 379 (KYYIPFIIIVSLVFSIIPLAT) threads the bilayer. The Extracellular segment spans residues 380 to 402 (KNYRMIRGNMHCWVHTTKLQNSL). The chain crosses the membrane as a helical span at residues 403–423 (FWIPLGIAITIGTIFIGLVMF). Residues 424-444 (EIHRIVSANSKGGVLKLEIKS) are Cytoplasmic-facing. A helical membrane pass occupies residues 445–465 (ILNVALIYLTFIYLFAFNFYM). Over 466 to 497 (NGQEGVVYGQIESFYQCTLENDASECTIQGPS) the chain is Extracellular. The helical transmembrane segment at 498–518 (IGSLGFFIFCIRIYGVYCFIL) threads the bilayer. At 519–619 (QGLNYRAYNI…TLKDIEVSKS (101 aa)) the chain is on the cytoplasmic side. Residues 581–605 (LNIDSAFSKNNESDDEDDYDPYKKS) form a disordered region.

The protein belongs to the G-protein coupled receptor Fz/Smo family.

Its subcellular location is the membrane. The chain is Frizzled and smoothened-like protein L (fslL) from Dictyostelium discoideum (Social amoeba).